We begin with the raw amino-acid sequence, 153 residues long: ORM1-like protein 1 (153 aa).

The Cytoplasmic portion of the chain corresponds to 1–26 (MNVGVAHSEVNPNTRVMNSRGMWLTY). The next 2 helical transmembrane spans lie at 27–46 (ALGV…FSVP) and 47–67 (VAWT…LHAV). At 68 to 100 (KGTPFETPDQGKARLLTHWEQLDYGVQFTSSRK) the chain is on the cytoplasmic side. A helical membrane pass occupies residues 101–121 (FLTISPIILYFLASFYTKYDP). Residues 122–123 (TH) are Extracellular-facing. A helical transmembrane segment spans residues 124-144 (FFINTASLLSVLIPKLPQLHG). Residues 145–153 (VRIFGINKY) lie on the Cytoplasmic side of the membrane.

It belongs to the ORM family. As to quaternary structure, ceramide-sensitive subunit of the serine palmitoyltransferase (SPT) complex, which is also composed of SPTLC1, SPTLC2/3 and SPTSSA/B.

It localises to the endoplasmic reticulum membrane. Its function is as follows. Plays an essential role in the homeostatic regulation of sphingolipid de novo biosynthesis by modulating the activity of the serine palmitoyltransferase (SPT) in response to ceramide levels. When complexed to SPT, the binding of ceramides to its N-terminus stabilizes a conformation that block SPT substrate entry, hence preventing SPT catalytic activity. Through this mechanism, maintains ceramide levels at sufficient concentrations for the production of complex sphingolipids, but which prevents the accumulation of ceramides to levels that trigger apoptosis. The chain is ORM1-like protein 1 (ormdl1) from Xenopus laevis (African clawed frog).